Reading from the N-terminus, the 492-residue chain is Protein adenylyltransferase Fic (492 aa).

The segment covering 1–17 has biased composition (low complexity); sequence MCTEAEQPSPPAQQQEQ. Residues 1–25 form a disordered region; it reads MCTEAEQPSPPAQQQEQGNPPLCKA. Residues 33-55 traverse the membrane as a helical segment; that stretch reads LYRLVLLFVAGSLAAWTFHALSS. TPR repeat units follow at residues 118–151 and 152–186; these read ALGALRMAQDLYLAGKDDKAARLFEHALALAPRH and PEVLLRYGEFLEHNQRNIVLADQYYFQALTISPSN. The Inhibitory (S/T)XXXE(G/N) motif signature appears at 243–248; it reads SVGIEG. ATP is bound by residues Glu247 and 328 to 331; that span reads VGGH. The Fido domain maps to 297 to 432; that stretch reads ITIKDILELH…IRPFVRFIAD (136 aa). Residue His375 is part of the active site. ATP is bound by residues 379–386, 411–412, and Asn419; these read DGNGRTSR and YY.

This sequence belongs to the fic family. Homodimer.

The protein localises to the membrane. The catalysed reaction is L-tyrosyl-[protein] + ATP = O-(5'-adenylyl)-L-tyrosyl-[protein] + diphosphate. It catalyses the reaction L-threonyl-[protein] + ATP = 3-O-(5'-adenylyl)-L-threonyl-[protein] + diphosphate. The enzyme catalyses 3-O-(5'-adenylyl)-L-threonyl-[protein] + H2O = L-threonyl-[protein] + AMP + H(+). With respect to regulation, the side chain of Glu-247 determines which of the two opposing activities (AMPylase or de-AMPylase) will take place. In response to endoplasmic reticulum stress, mediates de-AMPylase activity. Adenylyltransferase activity is inhibited by the inhibitory helix present at the N-terminus: Glu-247 binds ATP and competes with ATP-binding at Arg-386, thereby preventing adenylyltransferase activity. In unstressed cells, disengagement of Glu-247 promotes adenylyltransferase activity. Activation dissociates ATP-binding from Glu-247, allowing ordered binding of the entire ATP moiety with the alpha-phosphate in an orientation that is productive for accepting an incoming target hydroxyl side chain. Functionally, protein that can both mediate the addition of adenosine 5'-monophosphate (AMP) to specific residues of target proteins (AMPylation), and the removal of the same modification from target proteins (de-AMPylation), depending on the context. The side chain of Glu-247 determines which of the two opposing activities (AMPylase or de-AMPylase) will take place. Acts as a key regulator of the unfolded protein response (UPR) by mediating AMPylation or de-AMPylation of Hsc70-3/BiP. In unstressed cells, acts as an adenylyltransferase by mediating AMPylation of Hsc70-3/BiP at 'Thr-518', thereby inactivating it. In response to endoplasmic reticulum stress, acts as a phosphodiesterase by mediating removal of ATP (de-AMPylation) from Hsc70-3/BiP at 'Thr-518', leading to restore HSPA5/BiP activity. This is Protein adenylyltransferase Fic from Drosophila sechellia (Fruit fly).